Consider the following 335-residue polypeptide: N-acetyl-gamma-glutamyl-phosphate reductase (335 aa).

The active site involves Cys-156.

This sequence belongs to the NAGSA dehydrogenase family. Type 1 subfamily.

It is found in the cytoplasm. It carries out the reaction N-acetyl-L-glutamate 5-semialdehyde + phosphate + NADP(+) = N-acetyl-L-glutamyl 5-phosphate + NADPH + H(+). The protein operates within amino-acid biosynthesis; L-arginine biosynthesis; N(2)-acetyl-L-ornithine from L-glutamate: step 3/4. Its function is as follows. Catalyzes the NADPH-dependent reduction of N-acetyl-5-glutamyl phosphate to yield N-acetyl-L-glutamate 5-semialdehyde. This Aeromonas salmonicida (strain A449) protein is N-acetyl-gamma-glutamyl-phosphate reductase.